The following is a 294-amino-acid chain: MINGSIVALITPMNSDGSVDFASLERLVEFHIDQGTDAIVAVGTTGESATLPMNEHVTVVAQTVKFAAGRIPVIGGNGANATSEAIELTKSLSKVGVAAMLGVTPYYNKPTPKGLVAHYKAVAASTDIPQILYNVPGRTAVDMKPETVAELVAVSNIIGVKEATGDVSRVQRLRELCGNDFMLYSGDDATAREFLLLGGNGVISVANNIVPKAFKAMCDAALAGNAELAASIDEPLRGLYSTLFCEANPIPVKWAAHRMGLIECGHIRLPLTELSEQCHGLLLDAMTRAQIEVK.

Threonine 45 contributes to the pyruvate binding site. Tyrosine 133 acts as the Proton donor/acceptor in catalysis. Lysine 161 acts as the Schiff-base intermediate with substrate in catalysis. Pyruvate is bound at residue isoleucine 203.

Belongs to the DapA family. Homotetramer; dimer of dimers.

It localises to the cytoplasm. The catalysed reaction is L-aspartate 4-semialdehyde + pyruvate = (2S,4S)-4-hydroxy-2,3,4,5-tetrahydrodipicolinate + H2O + H(+). It functions in the pathway amino-acid biosynthesis; L-lysine biosynthesis via DAP pathway; (S)-tetrahydrodipicolinate from L-aspartate: step 3/4. Its function is as follows. Catalyzes the condensation of (S)-aspartate-beta-semialdehyde [(S)-ASA] and pyruvate to 4-hydroxy-tetrahydrodipicolinate (HTPA). The protein is 4-hydroxy-tetrahydrodipicolinate synthase of Shewanella sp. (strain ANA-3).